The primary structure comprises 108 residues: UPF0060 membrane protein SAR2425 (108 aa).

4 helical membrane-spanning segments follow: residues 5–25 (IFIFILAGLCEIGGGYLIWLW), 31–51 (SSLVGLIGGVILMLYGVIATF), 60–80 (VYAAYGGVFIIMSLIFAMVVD), and 86–106 (KYDVIGAIICIVGVLVMLLPS).

It belongs to the UPF0060 family.

It localises to the cell membrane. The protein is UPF0060 membrane protein SAR2425 of Staphylococcus aureus (strain MRSA252).